Here is a 215-residue protein sequence, read N- to C-terminus: NAD(P)H-hydrate epimerase (215 aa).

The YjeF N-terminal domain maps to 10-212; the sequence is SRELDDKTIN…DIGIYRGNAF (203 aa). Position 59–63 (59–63) interacts with (6S)-NADPHX; that stretch reads NNGGD. K(+)-binding residues include Asn-60 and Asp-122. Residues 126–132 and Asp-155 contribute to the (6S)-NADPHX site; that span reads GSGLSRN. Ser-158 provides a ligand contact to K(+).

Belongs to the NnrE/AIBP family. Requires K(+) as cofactor.

The enzyme catalyses (6R)-NADHX = (6S)-NADHX. It carries out the reaction (6R)-NADPHX = (6S)-NADPHX. Functionally, catalyzes the epimerization of the S- and R-forms of NAD(P)HX, a damaged form of NAD(P)H that is a result of enzymatic or heat-dependent hydration. This is a prerequisite for the S-specific NAD(P)H-hydrate dehydratase to allow the repair of both epimers of NAD(P)HX. The polypeptide is NAD(P)H-hydrate epimerase (Lentilactobacillus buchneri (strain NRRL B-30929) (Lactobacillus buchneri)).